The chain runs to 184 residues: uncharacterized protein (184 aa).

The disordered stretch occupies residues 1-24 (MGISDQINSNLSSQSPFTVSTNPS).

This is an uncharacterized protein from Dictyostelium discoideum (Social amoeba).